A 341-amino-acid chain; its full sequence is Anthranilate phosphoribosyltransferase (341 aa).

5-phospho-alpha-D-ribose 1-diphosphate-binding positions include Gly-81, Gly-84 to Asp-85, Thr-89, Asn-91 to Thr-94, Lys-109 to Ser-117, and Thr-121. Gly-81 is an anthranilate binding site. Ser-93 contributes to the Mg(2+) binding site. Asn-112 contacts anthranilate. Arg-167 is an anthranilate binding site. Residues Asp-226 and Glu-227 each coordinate Mg(2+).

It belongs to the anthranilate phosphoribosyltransferase family. In terms of assembly, homodimer. Mg(2+) serves as cofactor.

The catalysed reaction is N-(5-phospho-beta-D-ribosyl)anthranilate + diphosphate = 5-phospho-alpha-D-ribose 1-diphosphate + anthranilate. It functions in the pathway amino-acid biosynthesis; L-tryptophan biosynthesis; L-tryptophan from chorismate: step 2/5. Functionally, catalyzes the transfer of the phosphoribosyl group of 5-phosphorylribose-1-pyrophosphate (PRPP) to anthranilate to yield N-(5'-phosphoribosyl)-anthranilate (PRA). The sequence is that of Anthranilate phosphoribosyltransferase from Parvibaculum lavamentivorans (strain DS-1 / DSM 13023 / NCIMB 13966).